The primary structure comprises 365 residues: Short-chain dehydrogenase iccH (365 aa).

Residues Leu16, Arg52, and Asp70 each contribute to the NADP(+) site. An N-linked (GlcNAc...) asparagine glycan is attached at Asn90. Positions 102, 221, 225, and 260 each coordinate NADP(+). Tyr221 functions as the Proton donor in the catalytic mechanism. Lys225 acts as the Lowers pKa of active site Tyr in catalysis. The helical transmembrane segment at 267-287 (IWVMFLLMKFVLPLLAPLAVW) threads the bilayer. N-linked (GlcNAc...) asparagine glycosylation is found at Asn291 and Asn324.

This sequence belongs to the short-chain dehydrogenases/reductases (SDR) family.

The protein localises to the membrane. It participates in mycotoxin biosynthesis. Functionally, NADH-dependent flavin oxidoreductase; part of the gene cluster that mediates the biosynthesis of ilicicolin H, a 4-hydroxy-2-pyridonealkaloid that has potent and broad antifungal activities by inhibiting the mitochondrial respiration chain. IccA to iccE are sufficient for ilicicolin H biosynthesis and the roles of the remaining enzymes, iccF, iccG and iccH within the pathway have still to be determined. The biosynthesis of ilicicolin H starts with formation of the tetramic acid by the hybrid PKS-NRPS synthetase iccA with the partnering trans-enoyl reductase iccB since iccA lacks a designated enoylreductase (ER) domain. The cytochrome P450 monooxygenase iccC then catalyzes the ring expansion of the tetramate to the acyclic 2-pyridone. The pericyclase iccD further converts the acyclic 2-pyridone into 8-epi-ilicicolin H. Finally, the epimerase iccE converts 8-epi-ilicicolin H into ilicicolin H via epimerizationd. The sequence is that of Short-chain dehydrogenase iccH from Talaromyces variabilis (Penicillium variabile).